We begin with the raw amino-acid sequence, 596 residues long: Elongation factor 4 (596 aa).

The region spanning 2-183 is the tr-type G domain; sequence NNIRNFSIIA…TIIRKIPPPK (182 aa). GTP is bound by residues 14 to 19 and 130 to 133; these read DHGKST and NKID.

Belongs to the TRAFAC class translation factor GTPase superfamily. Classic translation factor GTPase family. LepA subfamily.

The protein localises to the cell inner membrane. It carries out the reaction GTP + H2O = GDP + phosphate + H(+). Its function is as follows. Required for accurate and efficient protein synthesis under certain stress conditions. May act as a fidelity factor of the translation reaction, by catalyzing a one-codon backward translocation of tRNAs on improperly translocated ribosomes. Back-translocation proceeds from a post-translocation (POST) complex to a pre-translocation (PRE) complex, thus giving elongation factor G a second chance to translocate the tRNAs correctly. Binds to ribosomes in a GTP-dependent manner. This is Elongation factor 4 from Campylobacter fetus subsp. fetus (strain 82-40).